Here is a 904-residue protein sequence, read N- to C-terminus: Eukaryotic translation initiation factor 3 subunit C (904 aa).

Disordered regions lie at residues methionine 1–aspartate 38 and phenylalanine 156–lysine 290. Polar residues predominate over residues isoleucine 22 to phenylalanine 32. Acidic residues predominate over residues aspartate 161 to alanine 183. Over residues phenylalanine 194–lysine 206 the composition is skewed to basic and acidic residues. The span at aspartate 207–alanine 232 shows a compositional bias: acidic residues. Positions isoleucine 237 to lysine 247 are enriched in basic and acidic residues. A compositionally biased stretch (basic residues) spans lysine 257–lysine 272. The PCI domain occupies phenylalanine 636 to proline 812. The segment at arginine 847–glutamate 904 is disordered. The segment covering tyrosine 860 to asparagine 873 has biased composition (low complexity). A compositionally biased stretch (basic and acidic residues) spans arginine 874–glutamate 904.

This sequence belongs to the eIF-3 subunit C family. In terms of assembly, component of the eukaryotic translation initiation factor 3 (eIF-3) complex.

The protein resides in the cytoplasm. In terms of biological role, component of the eukaryotic translation initiation factor 3 (eIF-3) complex, which is involved in protein synthesis of a specialized repertoire of mRNAs and, together with other initiation factors, stimulates binding of mRNA and methionyl-tRNAi to the 40S ribosome. The eIF-3 complex specifically targets and initiates translation of a subset of mRNAs involved in cell proliferation. This Culex quinquefasciatus (Southern house mosquito) protein is Eukaryotic translation initiation factor 3 subunit C.